The chain runs to 346 residues: Inositol 2-dehydrogenase/D-chiro-inositol 3-dehydrogenase (346 aa).

Over residues 322-331 the composition is skewed to basic and acidic residues; the sequence is GREESIELPK. Positions 322–346 are disordered; that stretch reads GREESIELPKKPAFYQHSAATPEQV.

Belongs to the Gfo/Idh/MocA family. Homotetramer.

It carries out the reaction myo-inositol + NAD(+) = scyllo-inosose + NADH + H(+). The enzyme catalyses 1D-chiro-inositol + NAD(+) = scyllo-inosine + NADH + H(+). It functions in the pathway polyol metabolism; myo-inositol degradation into acetyl-CoA; acetyl-CoA from myo-inositol: step 1/7. Involved in the oxidation of myo-inositol (MI) and D-chiro-inositol (DCI) to 2-keto-myo-inositol (2KMI or 2-inosose) and 1-keto-D-chiro-inositol (1KDCI), respectively. The polypeptide is Inositol 2-dehydrogenase/D-chiro-inositol 3-dehydrogenase (Shouchella clausii (strain KSM-K16) (Alkalihalobacillus clausii)).